The sequence spans 464 residues: Rab GDP-dissociation inhibitor (464 aa).

This sequence belongs to the Rab GDI family. Interacts with the GDP-bound form of Rab GTPase YPT7.

Its function is as follows. Regulates the GDP/GTP exchange reaction of YPT7 by inhibiting the dissociation of GDP from it, and the subsequent binding of GTP to YTP7. The polypeptide is Rab GDP-dissociation inhibitor (GDI1) (Pyricularia oryzae (strain 70-15 / ATCC MYA-4617 / FGSC 8958) (Rice blast fungus)).